The sequence spans 715 residues: Polyribonucleotide nucleotidyltransferase (715 aa).

Residues D493 and D499 each coordinate Mg(2+). One can recognise a KH domain in the interval 560-619 (PRMITIKINPEKIRDVIGKGGSVIRALTEETGTTIDISDDGVVTIASTNSDGMAEAKKRI). An S1 motif domain is found at 629–697 (GQVYEGTVLK…EKGRVRLSAK (69 aa)).

The protein belongs to the polyribonucleotide nucleotidyltransferase family. Requires Mg(2+) as cofactor.

The protein localises to the cytoplasm. The catalysed reaction is RNA(n+1) + phosphate = RNA(n) + a ribonucleoside 5'-diphosphate. Involved in mRNA degradation. Catalyzes the phosphorolysis of single-stranded polyribonucleotides processively in the 3'- to 5'-direction. The sequence is that of Polyribonucleotide nucleotidyltransferase from Burkholderia lata (strain ATCC 17760 / DSM 23089 / LMG 22485 / NCIMB 9086 / R18194 / 383).